The primary structure comprises 543 residues: CTP synthase (543 aa).

The segment at 1-267 (MKQTKYIFVT…LSPIAEILDL (267 aa)) is amidoligase domain. Position 15 (serine 15) interacts with CTP. Serine 15 serves as a coordination point for UTP. ATP-binding positions include 16–21 (SLGKGI) and aspartate 73. The Mg(2+) site is built by aspartate 73 and glutamate 141. Residues 148–150 (DIE), 188–193 (KTKPTQ), and lysine 224 contribute to the CTP site. UTP-binding positions include 188–193 (KTKPTQ) and lysine 224. The Glutamine amidotransferase type-1 domain maps to 292 to 543 (KIAFVGKYVD…IKAAINYEDN (252 aa)). Glycine 354 lines the L-glutamine pocket. The active-site Nucleophile; for glutamine hydrolysis is cysteine 381. Residues 382 to 385 (LGMQ), glutamate 405, and arginine 473 contribute to the L-glutamine site. Catalysis depends on residues histidine 516 and glutamate 518.

Belongs to the CTP synthase family. In terms of assembly, homotetramer.

The catalysed reaction is UTP + L-glutamine + ATP + H2O = CTP + L-glutamate + ADP + phosphate + 2 H(+). The enzyme catalyses L-glutamine + H2O = L-glutamate + NH4(+). It carries out the reaction UTP + NH4(+) + ATP = CTP + ADP + phosphate + 2 H(+). It functions in the pathway pyrimidine metabolism; CTP biosynthesis via de novo pathway; CTP from UDP: step 2/2. With respect to regulation, allosterically activated by GTP, when glutamine is the substrate; GTP has no effect on the reaction when ammonia is the substrate. The allosteric effector GTP functions by stabilizing the protein conformation that binds the tetrahedral intermediate(s) formed during glutamine hydrolysis. Inhibited by the product CTP, via allosteric rather than competitive inhibition. In terms of biological role, catalyzes the ATP-dependent amination of UTP to CTP with either L-glutamine or ammonia as the source of nitrogen. Regulates intracellular CTP levels through interactions with the four ribonucleotide triphosphates. This is CTP synthase from Campylobacter jejuni subsp. jejuni serotype O:6 (strain 81116 / NCTC 11828).